The sequence spans 502 residues: Acetylcholine receptor subunit alpha-type unc-63 (502 aa).

Positions 1–23 (MGPNDHGFAYILIFLLLSPPTHA) are cleaved as a signal peptide. The Extracellular portion of the chain corresponds to 24-263 (NRDANRLFED…HLRRKTLFYT (240 aa)). A glycan (N-linked (GlcNAc...) asparagine) is linked at N136. C151 and C165 are joined by a disulfide. Helical transmembrane passes span 264–284 (VNLI…FYLP), 293–313 (LCIS…EIIP), and 326–346 (LLFT…TLNV). Over 347 to 470 (HYRSPTTHTM…WKYISVVMDR (124 aa)) the chain is Cytoplasmic. The helical transmembrane segment at 471-491 (IFLITFTFACAFGTVVIIARA) threads the bilayer.

The protein belongs to the ligand-gated ion channel (TC 1.A.9) family. Acetylcholine receptor (TC 1.A.9.1) subfamily. In terms of assembly, component of nicotinic acetylcholine receptor. In muscles, composed of 2 non-alpha subunits lev-1 and unc-29, and 3 alpha subunits unc-38, unc-63 and lev-8. In cholinergic motoneurons, composed of 2 non-alpha subunits acr-2 and acr-3, and 3 alpha subunits unc-38, unc-63 and acr-12. Interacts with lev-10. In terms of tissue distribution, expressed in body wall muscles, in vulval muscles and in neurons.

The protein localises to the postsynaptic cell membrane. Its subcellular location is the cell membrane. Alpha subunit of nicotinic acetylcholine receptor (nAChR). Probably acts in cholinergic motoneurons to regulate presynaptic neurotransmitter release, thereby ensuring normal level of excitation of cholinergic motoneurons during locomotion. Involved in nAChR sensitivity to nicotine and levamisole. This chain is Acetylcholine receptor subunit alpha-type unc-63 (unc-63), found in Caenorhabditis elegans.